A 397-amino-acid polypeptide reads, in one-letter code: Cystinosin (397 aa).

Positions 1-24 are cleaved as a signal peptide; the sequence is MDFSTHRLTTLLLLLLATVALGNA. At 25–126 the chain is on the lumenal side; the sequence is QSSQLTVDSH…FVRVTVAKSR (102 aa). Residues Asn43 and Asn86 are each glycosylated (N-linked (GlcNAc...) asparagine). A helical transmembrane segment spans residues 127–147; that stretch reads ALIYTSIIFGWVYFVAWSVSF. The region spanning 132 to 187 is the PQ-loop 1 domain; sequence SIIFGWVYFVAWSVSFYPQIWSNYRRKSVEGLNFDFLALNIVGFTLYSMFNCGLYF. Topologically, residues 148-167 are cytoplasmic; the sequence is YPQIWSNYRRKSVEGLNFDF. The helical transmembrane segment at 168-188 threads the bilayer; it reads LALNIVGFTLYSMFNCGLYFI. Over 189–210 the chain is Lumenal; it reads EDLQNEYEVRYPLGVNPVMLND. A helical membrane pass occupies residues 211-231; sequence VVFSLHAMFATCITILQCFFY. Residues 232-239 lie on the Cytoplasmic side of the membrane; sequence QRAQQRVS. The chain crosses the membrane as a helical span at residues 240–260; sequence FIAYGILAIFAVVVVVSAGLA. At 261 to 263 the chain is on the lumenal side; sequence GGS. A helical membrane pass occupies residues 264–284; that stretch reads VIHWLDFLYYCSYVKLTITII. The 57-residue stretch at 271–327 folds into the PQ-loop 2 domain; the sequence is LYYCSYVKLTITIIKYVPQALMNYRRKSTSGWSIGNILLDFTGGTLSMLQMILNAHN. Over 285–302 the chain is Cytoplasmic; the sequence is KYVPQALMNYRRKSTSGW. The helical transmembrane segment at 303–323 threads the bilayer; the sequence is SIGNILLDFTGGTLSMLQMIL. Residues 324–340 are Lumenal-facing; it reads NAHNYDDWVSIFGDPTK. The chain crosses the membrane as a helical span at residues 341-361; sequence FGLGLFSVLFDVFFMLQHYVF. The Cytoplasmic portion of the chain corresponds to 362–397; the sequence is YRHSRESSSSDLTTVTDVQNRTNESPPPSEVTTEKY. The span at 373-385 shows a compositional bias: polar residues; the sequence is LTTVTDVQNRTNE. The segment at 373-397 is disordered; it reads LTTVTDVQNRTNESPPPSEVTTEKY.

Belongs to the cystinosin family.

The protein resides in the lysosome membrane. The enzyme catalyses L-cystine(out) + H(+)(out) = L-cystine(in) + H(+)(in). Cystine/H(+) symporter that mediates export of cystine, the oxidized dimer of cysteine, from lysosomes. Involved in cysteine homeostasis during periods of fasting, which indirectly regulates mTORC1-mediated signaling by supporting de novo CoA synthesis, the TCA cycle and amino acid metabolism during periods of food shortage. Important for maintaining autophagy, and for development and survival during periods of fasting. In Drosophila melanogaster (Fruit fly), this protein is Cystinosin.